Here is a 114-residue protein sequence, read N- to C-terminus: Pancreatic progenitor cell differentiation and proliferation factor (114 aa).

S9 carries the post-translational modification Phosphoserine. 2 disordered regions span residues 22 to 47 (GSTS…PGLP) and 75 to 114 (AEHS…GPPS). Over residues 23–33 (STSSNSSCSST) the composition is skewed to low complexity. Polar residues predominate over residues 102–114 (GGQSSTASAGPPS).

The protein belongs to the PPDPF family.

Functionally, probable regulator of exocrine pancreas development. This is Pancreatic progenitor cell differentiation and proliferation factor (PPDPF) from Homo sapiens (Human).